Reading from the N-terminus, the 347-residue chain is tRNA pseudouridine synthase D (347 aa).

The active-site Nucleophile is the aspartate 81. The TRUD domain maps to 158 to 305 (GVPNYFGSQR…RHDRRDIALK (148 aa)).

The protein belongs to the pseudouridine synthase TruD family.

It catalyses the reaction uridine(13) in tRNA = pseudouridine(13) in tRNA. Responsible for synthesis of pseudouridine from uracil-13 in transfer RNAs. The sequence is that of tRNA pseudouridine synthase D from Vibrio campbellii (strain ATCC BAA-1116).